The following is a 1481-amino-acid chain: Cystic fibrosis transmembrane conductance regulator (1481 aa).

The Cytoplasmic portion of the chain corresponds to 1–77; that stretch reads MQRSPLEKAS…KLINALRRCF (77 aa). Residues 78–98 form a helical membrane-spanning segment; that stretch reads FWRFTFYGILLYLGEVTKAVQ. An ABC transmembrane type-1 1 domain is found at 81–365; sequence FTFYGILLYL…WAVQTWYDSL (285 aa). The Extracellular portion of the chain corresponds to 99–122; it reads PLLLGRIIASYDPDNKTERSIAIY. The chain crosses the membrane as a helical span at residues 123–146; sequence LGIGLCLLFIVRTLLLHPAIFGLH. Over 147-195 the chain is Cytoplasmic; sequence HIGMQMRIAMFSLIYKKTLKLSSRVLDKISIGQLVSLLSNNLNKFDEGL. The chain crosses the membrane as a helical span at residues 196-216; the sequence is ALAHFVWIAPLQVALLMGLIW. Over 217 to 222 the chain is Extracellular; that stretch reads ELLQAS. Residues 223-243 form a helical membrane-spanning segment; it reads AFCGLGFLIVLALFQAGLGRM. At 244 to 298 the chain is on the cytoplasmic side; the sequence is MMKYRDQRAGKINERLVITSEMIENIQSVKAYCWEEAMEKIIENLRQTELKLTRK. Residues 299–319 traverse the membrane as a helical segment; sequence AAYVRYFNSSAFFFSGFFVVF. Residues 320–339 lie on the Extracellular side of the membrane; that stretch reads LSVLPYALIKGIVLRKIFTT. The chain crosses the membrane as a helical span at residues 340–358; sequence ISFCIVLRMAVTRQFPWAV. Over 359–858 the chain is Cytoplasmic; the sequence is QTWYDSLGAI…YLRYITLHKS (500 aa). Residues tryptophan 401, serine 434, 458 to 465, and glutamine 493 each bind ATP; that span reads GSTGAGKT. Residues 423-646 enclose the ABC transporter 1 domain; the sequence is NGDDNLFFSN…RPDFSSKLMG (224 aa). The S-palmitoyl cysteine moiety is linked to residue cysteine 524. Serine 549 and serine 660 each carry phosphoserine. The interval 654–831 is disordered R region; that stretch reads SSERRNSILT…EEINEEDLKE (178 aa). Serine 670 carries the post-translational modification Phosphoserine; by PKA. Serine 686 carries the post-translational modification Phosphoserine. A Glycyl lysine isopeptide (Lys-Gly) (interchain with G-Cter in ubiquitin) cross-link involves residue lysine 688. 2 positions are modified to phosphoserine: serine 700 and serine 712. A Phosphothreonine modification is found at threonine 717. Phosphoserine is present on residues serine 737, serine 753, serine 768, serine 790, serine 795, and serine 813. The helical transmembrane segment at 859–879 threads the bilayer; sequence LIFVLIWCLVIFLAEVAASLV. The region spanning 859–1155 is the ABC transmembrane type-1 2 domain; sequence LIFVLIWCLV…AVNSSIDVDS (297 aa). The Extracellular portion of the chain corresponds to 880–918; sequence VLWLLGNTPFQDKGNSTYSRNNSYAVIITNTSSYYVFYI. N-linked (GlcNAc...) asparagine glycans are attached at residues asparagine 894, asparagine 900, and asparagine 909. Residues 919 to 939 form a discontinuously helical membrane-spanning segment; sequence YVGVADTLLALGFFRGLPLVH. Topologically, residues 940-990 are cytoplasmic; sequence TLITVSKMLHHKMLHSVLQAPMSTLNTLKAGGILNRFSKDIAILDDLLPLT. Residues 991-1011 form a helical membrane-spanning segment; that stretch reads IFDFIQLLLIVIGAIAVVSVL. The Extracellular portion of the chain corresponds to 1012 to 1013; the sequence is QP. A helical transmembrane segment spans residues 1014–1034; that stretch reads YIFLATVPVIAAFILLRAYFL. Over 1035–1095 the chain is Cytoplasmic; that stretch reads QTSQQLKQLE…TANWFLYLST (61 aa). A helical transmembrane segment spans residues 1096–1116; the sequence is LRWFQMRIEMIFVIFFIAVTF. Residues 1117-1130 are Extracellular-facing; sequence ISILTTGEGEGTVG. The helical transmembrane segment at 1131 to 1151 threads the bilayer; it reads IILTLAMNIMSTLQWAVNSSI. Residues 1152–1481 lie on the Cytoplasmic side of the membrane; that stretch reads DVDSLMRSVS…TEEEVQETRL (330 aa). The 234-residue stretch at 1211 to 1444 folds into the ABC transporter 2 domain; the sequence is MTIKDLTAKY…KSLFRQAISH (234 aa). Residues tyrosine 1220 and 1245–1252 each bind ATP; that span reads GRTGSGKS. Residues 1387-1481 form an interaction with GORASP2 region; sequence RALKQAFADC…TEEEVQETRL (95 aa). Cysteine 1396 is lipidated: S-palmitoyl cysteine. 2 positions are modified to phosphoserine: serine 1445 and serine 1457. Residues 1453–1481 form a disordered region; sequence HRNSSKYKSQPQIASLKEETEEEVQETRL. Over residues 1471 to 1481 the composition is skewed to acidic residues; the sequence is ETEEEVQETRL. The PDZ-binding signature appears at 1479–1481; sequence TRL.

It belongs to the ABC transporter superfamily. ABCC family. CFTR transporter (TC 3.A.1.202) subfamily. As to quaternary structure, monomer; does not require oligomerization for channel activity. May form oligomers in the membrane. Interacts with SLC26A3, SLC26A6 and NHERF1. Interacts with SHANK2. Interacts with MYO6. Interacts (via C-terminus) with GOPC (via PDZ domain); this promotes CFTR internalization and thereby decreases channel activity. Interacts with SLC4A7 through NHERF1. Found in a complex with MYO5B and RAB11A. Interacts with ANO1. Interacts with SLC26A8. Interacts with AHCYL1; the interaction increases CFTR activity. Interacts with CSE1L. The core-glycosylated form interacts with GORASP2 (via PDZ GRASP-type 1 domain) in respone to ER stress. Interacts with MARCHF2; the interaction leads to CFTR ubiqtuitination and degradation. Interacts with ADGRG2. Post-translationally, N-glycosylated. In terms of processing, phosphorylated; cAMP treatment promotes phosphorylation and activates the channel. Dephosphorylation decreases the ATPase activity (in vitro). Phosphorylation at PKA sites activates the channel. Phosphorylation at PKC sites enhances the response to phosphorylation by PKA. Phosphorylated by AMPK; this inhibits channel activity. Ubiquitinated, leading to its degradation in the lysosome. Deubiquitination by USP10 in early endosomes enhances its endocytic recycling to the cell membrane. Ubiquitinated by RNF185 during ER stress. Ubiquitinated by MARCHF2.

It localises to the apical cell membrane. The protein resides in the early endosome membrane. The protein localises to the cell membrane. Its subcellular location is the recycling endosome membrane. It is found in the endoplasmic reticulum membrane. It localises to the nucleus. The catalysed reaction is ATP + H2O + closed Cl(-) channel = ADP + phosphate + open Cl(-) channel.. The enzyme catalyses chloride(in) = chloride(out). It carries out the reaction hydrogencarbonate(in) = hydrogencarbonate(out). It catalyses the reaction ATP + H2O = ADP + phosphate + H(+). Functionally, epithelial ion channel that plays an important role in the regulation of epithelial ion and water transport and fluid homeostasis. Mediates the transport of chloride ions across the cell membrane. Possesses an intrinsic ATPase activity and utilizes ATP to gate its channel; the passive flow of anions through the channel is gated by cycles of ATP binding and hydrolysis by the ATP-binding domains. The ion channel is also permeable to HCO(3)(-); selectivity depends on the extracellular chloride concentration. Exerts its function also by modulating the activity of other ion channels and transporters. Contributes to the regulation of the pH and the ion content of the epithelial fluid layer. Modulates the activity of the epithelial sodium channel (ENaC) complex, in part by regulating the cell surface expression of the ENaC complex. May regulate bicarbonate secretion and salvage in epithelial cells by regulating the transporter SLC4A7. Can inhibit the chloride channel activity of ANO1. Plays a role in the chloride and bicarbonate homeostasis during sperm epididymal maturation and capacitation. In Aotus nancymaae (Ma's night monkey), this protein is Cystic fibrosis transmembrane conductance regulator.